The chain runs to 853 residues: Dynamin-A (853 aa).

Positions 22 to 296 (PLDLPQIVVV…LMFHIRDTLP (275 aa)) constitute a Dynamin-type G domain. The segment at 32–39 (GSQSSGKS) is G1 motif. Position 32 to 40 (32 to 40 (GSQSSGKSS)) interacts with GTP. The tract at residues 58–60 (VTR) is G2 motif. The G3 motif stretch occupies residues 138–141 (DLPG). The tract at residues 207 to 210 (TKLD) is G4 motif. Residues 207–213 (TKLDLMD) and 238–241 (NRSQ) contribute to the GTP site. The segment at 237 to 240 (INRS) is G5 motif. Composition is skewed to low complexity over residues 523–569 (DQYQ…QQNQ) and 590–607 (PAQQ…KGPQ). A disordered region spans residues 523-738 (DQYQQQQQQQ…RYQDDFYGRG (216 aa)). Residues 610–624 (PPNQSKPSSIPQNGP) show a composition bias toward polar residues. Composition is skewed to low complexity over residues 625–635 (NNNNNNNNNNN) and 664–728 (NNSN…SSYN). The region spanning 762 to 853 (TELIRELLIS…IINEIRDFRN (92 aa)) is the GED domain.

It belongs to the TRAFAC class dynamin-like GTPase superfamily. Dynamin/Fzo/YdjA family.

The protein localises to the cytoplasm. Functionally, function in membrane trafficking processes along the endo-lysosomal pathway. The polypeptide is Dynamin-A (dymA) (Dictyostelium discoideum (Social amoeba)).